Here is a 309-residue protein sequence, read N- to C-terminus: MRGYKIFSGSANVEFARQVSKYLSLPLSDAGVKRFSDGEISVQIDESVRGKDVFIIQSTCAPTNDNLMELLILTDALRRSSANSITAIIPYFGYARQDRKANPRVPITAKLVANLIQAAGIDRVATIDLHAGQIQGFFDIPVDNLYGSIVFNDYIKAKHFKNAIIGSPDIGGVARARSVAKHLGLDIVIVDKRREKANESEVMNIIGDVKDKEVILVDDIIDTAGTIVKAAEALKEKGAKSVMACCTHAVLSGKAYERIASGVLDELVVTDTIPLKEQLPNIKVLSVTPVFAEVIRRVYHNESVNSLFI.

ATP-binding positions include 37 to 39 (DGE) and 96 to 97 (RQ). Residues His130 and Asp169 each coordinate Mg(2+). Residue Lys192 is part of the active site. Residues Arg194, Asp218, and 222-226 (DTAGT) contribute to the D-ribose 5-phosphate site.

Belongs to the ribose-phosphate pyrophosphokinase family. Class I subfamily. In terms of assembly, homohexamer. It depends on Mg(2+) as a cofactor.

It localises to the cytoplasm. It carries out the reaction D-ribose 5-phosphate + ATP = 5-phospho-alpha-D-ribose 1-diphosphate + AMP + H(+). Its pathway is metabolic intermediate biosynthesis; 5-phospho-alpha-D-ribose 1-diphosphate biosynthesis; 5-phospho-alpha-D-ribose 1-diphosphate from D-ribose 5-phosphate (route I): step 1/1. Involved in the biosynthesis of the central metabolite phospho-alpha-D-ribosyl-1-pyrophosphate (PRPP) via the transfer of pyrophosphoryl group from ATP to 1-hydroxyl of ribose-5-phosphate (Rib-5-P). In Campylobacter jejuni subsp. jejuni serotype O:2 (strain ATCC 700819 / NCTC 11168), this protein is Ribose-phosphate pyrophosphokinase.